The primary structure comprises 309 residues: Spermatid maturation protein 1 (309 aa).

Residues 29 to 49 (VLLLLGLIICINISINIVTLL) form a helical membrane-spanning segment. A disordered region spans residues 209–231 (PPPPSPEAPSHKNGGEGAVPEAE). A coiled-coil region spans residues 259–285 (RIVYDARDMRRRLRELTREVEALSGCY).

The protein resides in the membrane. It is found in the cytoplasm. In terms of biological role, required for proper cytoplasm removal during spermatogenesis. The chain is Spermatid maturation protein 1 (SPEM1) from Homo sapiens (Human).